Reading from the N-terminus, the 64-residue chain is uncharacterized protein (64 aa).

The protein belongs to the orthopoxviruses VACWR006 protein family.

This is an uncharacterized protein from Vaccinia virus (strain Western Reserve) (VACV).